A 363-amino-acid polypeptide reads, in one-letter code: Tetraacyldisaccharide 4'-kinase (363 aa).

ATP is bound at residue 62–69 (RVGGTGKT).

The protein belongs to the LpxK family.

The catalysed reaction is a lipid A disaccharide + ATP = a lipid IVA + ADP + H(+). It participates in glycolipid biosynthesis; lipid IV(A) biosynthesis; lipid IV(A) from (3R)-3-hydroxytetradecanoyl-[acyl-carrier-protein] and UDP-N-acetyl-alpha-D-glucosamine: step 6/6. In terms of biological role, transfers the gamma-phosphate of ATP to the 4'-position of a tetraacyldisaccharide 1-phosphate intermediate (termed DS-1-P) to form tetraacyldisaccharide 1,4'-bis-phosphate (lipid IVA). The protein is Tetraacyldisaccharide 4'-kinase of Polynucleobacter asymbioticus (strain DSM 18221 / CIP 109841 / QLW-P1DMWA-1) (Polynucleobacter necessarius subsp. asymbioticus).